Consider the following 208-residue polypeptide: Large ribosomal subunit protein uL4 (208 aa).

Positions 49–78 (HKAKTRAEVRGGGKKPFRQKGTGNARQGST) are disordered. A compositionally biased stretch (polar residues) spans 69 to 78 (GTGNARQGST).

This sequence belongs to the universal ribosomal protein uL4 family. Part of the 50S ribosomal subunit.

One of the primary rRNA binding proteins, this protein initially binds near the 5'-end of the 23S rRNA. It is important during the early stages of 50S assembly. It makes multiple contacts with different domains of the 23S rRNA in the assembled 50S subunit and ribosome. In terms of biological role, forms part of the polypeptide exit tunnel. The chain is Large ribosomal subunit protein uL4 from Chlorobaculum tepidum (strain ATCC 49652 / DSM 12025 / NBRC 103806 / TLS) (Chlorobium tepidum).